Reading from the N-terminus, the 245-residue chain is Ribonuclease PH (245 aa).

Phosphate is bound by residues R86 and 124 to 126; that span reads GTR.

This sequence belongs to the RNase PH family. As to quaternary structure, homohexameric ring arranged as a trimer of dimers.

The catalysed reaction is tRNA(n+1) + phosphate = tRNA(n) + a ribonucleoside 5'-diphosphate. Phosphorolytic 3'-5' exoribonuclease that plays an important role in tRNA 3'-end maturation. Removes nucleotide residues following the 3'-CCA terminus of tRNAs; can also add nucleotides to the ends of RNA molecules by using nucleoside diphosphates as substrates, but this may not be physiologically important. Probably plays a role in initiation of 16S rRNA degradation (leading to ribosome degradation) during starvation. The chain is Ribonuclease PH from Bacillus mycoides (strain KBAB4) (Bacillus weihenstephanensis).